A 131-amino-acid polypeptide reads, in one-letter code: Small ribosomal subunit protein uS12c (131 aa).

It belongs to the universal ribosomal protein uS12 family. As to quaternary structure, part of the 30S ribosomal subunit.

It is found in the plastid. The protein localises to the chloroplast. In terms of biological role, with S4 and S5 plays an important role in translational accuracy. Located at the interface of the 30S and 50S subunits. This Stigeoclonium helveticum (Green alga) protein is Small ribosomal subunit protein uS12c (rps12).